The chain runs to 531 residues: Cation transporter HKT1;3 (531 aa).

Residues 1-46 (MNHCLVVSHKKLQTFRTFAASKFSSFTKSAQKSIKYSFQFIYQNNP) are Cytoplasmic-facing. 2 consecutive transmembrane segments (helical) span residues 47-67 (LFVH…SLKV) and 108-128 (LWVL…MLGI). At 129–190 (HFMRAEFGTK…GGHVEPKTIK (62 aa)) the chain is on the cytoplasmic side. Helical transmembrane passes span 191–211 (FLGF…SLLI) and 264–284 (ILLL…APCL). Residues 285–321 (RLMVWSLEKITGKKDCRYILEYPKAIGYKHLMSTRES) are Cytoplasmic-facing. A run of 2 helical transmembrane segments spans residues 322–342 (VYLT…FLSL) and 383–403 (SAIL…SFLP). Residues 404-421 (RHDGEDSKTEKINKRKGL) are Cytoplasmic-facing. 2 helical membrane-spanning segments follow: residues 422–442 (LENW…LICI) and 494–514 (YGFA…VMLF). Residues 515 to 530 (GRLKTFNMKGGRAWKL) lie on the Cytoplasmic side of the membrane.

Belongs to the TrkH potassium transport family. HKT (TC 2.A.38.3) subfamily. As to quaternary structure, interacts with CNIH1. As to expression, weakly expressed. In roots, expressed in epidermis, exodermis, cortex, and sieve elements and companion cells of phloem. In mature leaves, expressed in large highly vacuolated cells of the adaxial epidermis, phloem and xylem.

Its subcellular location is the endoplasmic reticulum membrane. The protein localises to the golgi apparatus membrane. It carries out the reaction Na(+)(in) = Na(+)(out). Functions as a highly-selective sodium transporter. Does not seem to function as sodium-potassium cotransporter. May be involved in turgor changes for rolling and unrolling of leaves in response to environmental variations. The chain is Cation transporter HKT1;3 from Oryza sativa subsp. japonica (Rice).